Here is a 215-residue protein sequence, read N- to C-terminus: Late embryogenesis abundant protein 14 (215 aa).

Disordered regions lie at residues 1–129 (MASQ…GQTG) and 190–215 (SGDN…SDYQ). Composition is skewed to basic and acidic residues over residues 13–24 (GETKARAEEKTG), 32–41 (EKAREAKDTA), 54–81 (GAKE…KDAA), and 88–111 (AMDK…DRAA). Over residues 192-215 (DNKNNAAAGKDTSTYKPGTGSDYQ) the composition is skewed to polar residues.

The protein belongs to the LEA type 4 family. As to expression, expressed in the shoot apex and leaves. Expressed in dry seeds. Expressed in roots and leaves.

It is found in the nucleus. The sequence is that of Late embryogenesis abundant protein 14 from Oryza sativa subsp. japonica (Rice).